The sequence spans 641 residues: E3 ubiquitin-protein ligase TRIM47 (641 aa).

The RING-type zinc finger occupies 9–58 (CPICLEPLREPVTLPCGHNFCLACLGALWPHRSAGGTGGSGGPARCPLCQ). Threonine 72 carries the post-translational modification Phosphothreonine. Residues 81–123 (QGSVPGPMSAPASGSTRGATPEPSAPSAPPPAPEPSAPCAPEQ) form a disordered region. The segment covering 103 to 118 (PSAPSAPPPAPEPSAP) has biased composition (pro residues). Residues 181–221 (LEESLCPRHLRPLERYCRVERVCLCEACATQDHRGHELVPL) form a B box-type zinc finger. Zn(2+) is bound by residues cysteine 186, histidine 189, cysteine 208, and histidine 213. Residues 305–325 (QGDLRRQEEQRSRLSKARHNL) are a coiled coil. Serine 393 is subject to Phosphoserine. Residues 396-416 (DGLQKLGSEDVESQDPDSTSL) are disordered. Residues 413–634 (STSLLESEAP…LQIGPLKKSC (222 aa)) enclose the B30.2/SPRY domain. Serine 464 is subject to Phosphoserine. An Omega-N-methylarginine modification is found at arginine 585. At serine 591 the chain carries Phosphoserine.

Belongs to the TRIM/RBCC family. Expressed in hepatocytes, expression is increased in fatty livers.

The protein localises to the cytoplasm. It localises to the nucleus. The enzyme catalyses S-ubiquitinyl-[E2 ubiquitin-conjugating enzyme]-L-cysteine + [acceptor protein]-L-lysine = [E2 ubiquitin-conjugating enzyme]-L-cysteine + N(6)-ubiquitinyl-[acceptor protein]-L-lysine.. It functions in the pathway protein modification; protein ubiquitination. In terms of biological role, E3 ubiquitin-protein ligase that mediates the ubiquitination and proteasomal degradation of CYLD. The sequence is that of E3 ubiquitin-protein ligase TRIM47 from Mus musculus (Mouse).